Consider the following 645-residue polypeptide: Meiosis induction protein kinase IME2/SME1 (645 aa).

The interval 1–24 (MVEKRSRQSSSSGSEFSVPPDVDN) is disordered. Over residues 8–17 (QSSSSGSEFS) the composition is skewed to low complexity. In terms of domain architecture, Protein kinase spans 38–386 (YQLIEKLGAG…AQELCEMPFF (349 aa)). ATP contacts are provided by residues 44–52 (LGAGSFGCV) and Lys67. The active-site Proton acceptor is the Asp193.

It belongs to the protein kinase superfamily. Ser/Thr protein kinase family.

The enzyme catalyses L-seryl-[protein] + ATP = O-phospho-L-seryl-[protein] + ADP + H(+). It carries out the reaction L-threonyl-[protein] + ATP = O-phospho-L-threonyl-[protein] + ADP + H(+). Functionally, protein kinase which is essential for the initiation of meiosis and sporulation. The sequence is that of Meiosis induction protein kinase IME2/SME1 (IME2) from Saccharomyces cerevisiae (strain ATCC 204508 / S288c) (Baker's yeast).